A 242-amino-acid chain; its full sequence is Histone-lysine N-methyltransferase set-1 (242 aa).

A disordered region spans residues 1–61 (MKVAAKKLAT…TRSRKGVSVK (61 aa)). Positions 30–43 (SENPSSLASHSSSS) are enriched in low complexity. One can recognise an SET domain in the interval 104–226 (RLLEVYKDVV…QGEELLYDYG (123 aa)). Residues 114-116 (KGR), Tyr-159, and 186-187 (NH) contribute to the S-adenosyl-L-methionine site.

The protein belongs to the class V-like SAM-binding methyltransferase superfamily. Histone-lysine methyltransferase family. PR/SET subfamily. In embryos, it is expressed ubiquitously. In late embryos, it is expressed in hypodermal seam cells. In L3 and L4 larvae and thereafter, it is expressed in vulval precursor cells. In adult males, it is also expressed in 6 unidentified posterior cells.

It localises to the nucleus. It is found in the chromosome. The enzyme catalyses L-lysyl(20)-[histone H4] + S-adenosyl-L-methionine = N(6)-methyl-L-lysyl(20)-[histone H4] + S-adenosyl-L-homocysteine + H(+). In terms of biological role, histone methyltransferase that specifically monomethylates 'Lys-20' of histone H4 (H4K20me1). H4K20me1 is enriched on hermaphrodite X chromosomes and during mitosis. Involved in dosage compensation by repression of X-linked gene expression in hermaphrodites. Plays a role in growth and body fat regulation downstream of the TOR complex 2 pathway. The sequence is that of Histone-lysine N-methyltransferase set-1 (set-1) from Caenorhabditis elegans.